Reading from the N-terminus, the 104-residue chain is Small ribosomal subunit protein bS16 (104 aa).

This sequence belongs to the bacterial ribosomal protein bS16 family.

This Gemmatimonas aurantiaca (strain DSM 14586 / JCM 11422 / NBRC 100505 / T-27) protein is Small ribosomal subunit protein bS16.